Consider the following 430-residue polypeptide: KIN17-like protein (430 aa).

Residues 28-50 (CQMCQKQCRDENGFKCHCMSESH) form a C2H2-type zinc finger. A winged helix-turn-helix (wHTH) region spans residues 51-160 (QRQMQVFGQA…KARLKRKRIK (110 aa)). The stretch at 147–183 (EQAVKARLKRKRIKSDLAEDERQERMIARQIERAQQS) forms a coiled coil. Positions 155-158 (KRKR) match the Nuclear localization signal (NLS) motif. 2 disordered regions span residues 179–230 (RAQQ…ANKA) and 261–284 (EEEDEVSARDKEKEELAKKKGKDA). Residues 191 to 224 (LGDDASPDGSEGESGSEDEYSDSENDHEGQEEDA) show a composition bias toward acidic residues. Basic and acidic residues predominate over residues 261 to 278 (EEEDEVSARDKEKEELAK). A coiled-coil region spans residues 283 to 312 (DAINAAEARRSALDELMKEEEKAKERSNRK). A C-terminal subdomain A region spans residues 319–370 (GIVVKVMSKSLAEKGYCKQKGVVKRVIDKYVGEIEMLESKHVLRVDQDELET). Residues 376 to 427 (GGLVRIVNGAYRGSNARLLSVDTERFCAKVQVEKGLYDGKVLKAIEYEDICK) form a C-terminal subdomain B region.

The protein belongs to the KIN17 family.

Its subcellular location is the nucleus. This is KIN17-like protein from Oryza sativa subsp. japonica (Rice).